The following is a 461-amino-acid chain: 3-isopropylmalate dehydratase large subunit (461 aa).

Positions 338, 398, and 401 each coordinate [4Fe-4S] cluster.

This sequence belongs to the aconitase/IPM isomerase family. LeuC type 1 subfamily. As to quaternary structure, heterodimer of LeuC and LeuD. [4Fe-4S] cluster is required as a cofactor.

It carries out the reaction (2R,3S)-3-isopropylmalate = (2S)-2-isopropylmalate. Its pathway is amino-acid biosynthesis; L-leucine biosynthesis; L-leucine from 3-methyl-2-oxobutanoate: step 2/4. Catalyzes the isomerization between 2-isopropylmalate and 3-isopropylmalate, via the formation of 2-isopropylmaleate. In Streptococcus mutans serotype c (strain ATCC 700610 / UA159), this protein is 3-isopropylmalate dehydratase large subunit.